The sequence spans 257 residues: Hydroxyacylglutathione hydrolase (257 aa).

Residues His-54, His-56, Asp-58, His-59, His-109, Asp-129, and His-167 each coordinate Zn(2+).

This sequence belongs to the metallo-beta-lactamase superfamily. Glyoxalase II family. In terms of assembly, monomer. It depends on Zn(2+) as a cofactor.

The catalysed reaction is an S-(2-hydroxyacyl)glutathione + H2O = a 2-hydroxy carboxylate + glutathione + H(+). Its pathway is secondary metabolite metabolism; methylglyoxal degradation; (R)-lactate from methylglyoxal: step 2/2. Functionally, thiolesterase that catalyzes the hydrolysis of S-D-lactoyl-glutathione to form glutathione and D-lactic acid. This is Hydroxyacylglutathione hydrolase from Marinomonas sp. (strain MWYL1).